Consider the following 1399-residue polypeptide: DNA-directed RNA polymerase subunit beta' (1399 aa).

Cys70, Cys72, Cys85, and Cys88 together coordinate Zn(2+). The Mg(2+) site is built by Asp460, Asp462, and Asp464. Residues Cys814, Cys888, Cys895, and Cys898 each contribute to the Zn(2+) site.

The protein belongs to the RNA polymerase beta' chain family. As to quaternary structure, the RNAP catalytic core consists of 2 alpha, 1 beta, 1 beta' and 1 omega subunit. When a sigma factor is associated with the core the holoenzyme is formed, which can initiate transcription. The cofactor is Mg(2+). Requires Zn(2+) as cofactor.

The enzyme catalyses RNA(n) + a ribonucleoside 5'-triphosphate = RNA(n+1) + diphosphate. Functionally, DNA-dependent RNA polymerase catalyzes the transcription of DNA into RNA using the four ribonucleoside triphosphates as substrates. This Pseudomonas putida (strain GB-1) protein is DNA-directed RNA polymerase subunit beta'.